Reading from the N-terminus, the 170-residue chain is Protein SprT (170 aa).

The region spanning 23 to 165 is the SprT-like domain; sequence QLANQHLGTD…RECGEKLQFV (143 aa). Zn(2+) is bound at residue H78. The active site involves E79. A Zn(2+)-binding site is contributed by H82.

This sequence belongs to the SprT family. Zn(2+) is required as a cofactor.

The protein localises to the cytoplasm. The polypeptide is Protein SprT (Yersinia enterocolitica serotype O:8 / biotype 1B (strain NCTC 13174 / 8081)).